Consider the following 447-residue polypeptide: Tetratricopeptide repeat protein 23 (447 aa).

TPR repeat units lie at residues 45–78, 137–170, 186–219, and 356–389; these read LHLCEEKAKSYSNSHEYKQAVHELVRCVALTRIC, IELFHTMGRALLSLQKFKEAAENLTKAERLSKEL, ARIRLSFAQVYQGQKKSKEALSHYQAALEYVEIS, and AETYRLLGGADLAQGNHSGARKKLKKCLQIQTLL.

Found Associated with the EvC complex composed of EFCAB7, IQCE, EVC2 and EVC.

Its subcellular location is the cell projection. The protein resides in the cilium. Its function is as follows. Participates positively in the ciliary Hedgehog (Hh) signaling. In Homo sapiens (Human), this protein is Tetratricopeptide repeat protein 23 (TTC23).